The following is a 361-amino-acid chain: Probable cytosolic iron-sulfur protein assembly protein 1 (361 aa).

7 WD repeats span residues 10-49, 56-105, 120-160, 167-206, 213-265, 280-319, and 327-361; these read AHSD…NFPQ, THKR…TEIL, GHEN…EEFE, DHQH…DDWS, GHEG…SIKH, VHQY…SWSI, and HGVH…IWKP.

Belongs to the WD repeat CIA1 family. Interacts with NAR1.

The protein resides in the cytoplasm. It is found in the nucleus. Its function is as follows. Essential component of the cytosolic iron-sulfur (Fe/S) protein assembly machinery. Required for the maturation of extramitochondrial Fe/S proteins. The protein is Probable cytosolic iron-sulfur protein assembly protein 1 of Scheffersomyces stipitis (strain ATCC 58785 / CBS 6054 / NBRC 10063 / NRRL Y-11545) (Yeast).